Here is a 440-residue protein sequence, read N- to C-terminus: Protein disulfide-isomerase A6 (440 aa).

The first 19 residues, 1-19, serve as a signal peptide directing secretion; the sequence is MALLVLGLVSCTFFLAVNG. Thioredoxin domains follow at residues 20–133 and 154–287; these read LYSS…ALRQ and SDSS…EDIA. Residues Cys-55 and Cys-58 each act as nucleophile in the active site. A disulfide bridge links Cys-55 with Cys-58. The residue at position 129 (Ser-129) is a Phosphoserine. Positions 141–161 are disordered; sequence GRSGGYSSGKQGRSDSSSKKD. The span at 152–161 shows a compositional bias: basic and acidic residues; that stretch reads GRSDSSSKKD. Ser-156 is subject to Phosphoserine; by FAM20C. A Phosphoserine modification is found at Ser-158. Active-site nucleophile residues include Cys-190 and Cys-193. A disulfide bridge links Cys-190 with Cys-193. Ser-428 is modified (phosphoserine). The Prevents secretion from ER signature appears at 437 to 440; the sequence is KDEL.

It belongs to the protein disulfide isomerase family. Part of a large chaperone multiprotein complex comprising DNAJB11, HSP90B1, HSPA5, HYOU, PDIA2, PDIA4, PDIA6, PPIB, SDF2L1, UGGT1 and very small amounts of ERP29, but not, or at very low levels, CALR nor CANX. Interacts with MICA on the surface of tumor cells, leading to MICA disulfide bond reduction which is required for its release from tumor cells. Interacts with ITGB3 following platelet stimulation. Interacts with ERN1; the interaction is direct. Interacts with EIF2AK3. Expressed in platelets (at protein level).

It is found in the endoplasmic reticulum lumen. The protein resides in the cell membrane. It localises to the melanosome. It catalyses the reaction Catalyzes the rearrangement of -S-S- bonds in proteins.. In terms of biological role, may function as a chaperone that inhibits aggregation of misfolded proteins. Negatively regulates the unfolded protein response (UPR) through binding to UPR sensors such as ERN1, which in turn inactivates ERN1 signaling. May also regulate the UPR via the EIF2AK3 UPR sensor. Plays a role in platelet aggregation and activation by agonists such as convulxin, collagen and thrombin. The protein is Protein disulfide-isomerase A6 (PDIA6) of Homo sapiens (Human).